Reading from the N-terminus, the 422-residue chain is MKKSIALVLSIVLLAALFAVPASAGEQNTIRVIVSVDKAKFNPHEVLGIGGHIVYQFKLIPAVVVDVPANAVGKLKKMPGVEKVEFDHQAVLLGKPSWLGGGSTQPAQTIPWGIERVKAPSVWSITDGSVSVIQVAVLDTGVDYDHPDLAANIAWCVSTLRGKVSTKLRDCADQNGHGTHVIGTIAALNNDIGVVGVAPGVQIYSVRVLDARGSGSYSDIAIGIEQAILGPDGVADKDGDGIIAGDPDDDAAEVISMSLGGPADDSYLYDMIIQAYNAGIVIVAASGNEGAPSPSYPAAYPEVIAVGAIDSNDNIASFSNRQPEVSAPGVDILSTYPDDSYETLMGTSMATPHVSGVVALIQAAYYQKYGKILPVGTFDDISKNTVRGILHITADDLGPTGWDADYGYGVVRAALAVQAALG.

The signal sequence occupies residues methionine 1 to alanine 24. Positions glycine 25–proline 106 are excised as a propeptide. Residues proline 111 to valine 417 form the Peptidase S8 domain. Active-site charge relay system residues include aspartate 139, histidine 177, and serine 348.

It belongs to the peptidase S8 family. In terms of assembly, monomer. Requires Ca(2+) as cofactor.

The protein localises to the secreted. Its function is as follows. Has a broad substrate specificity with a slight preference to large hydrophobic amino acid residues at the P1 position. The chain is Tk-subtilisin from Thermococcus kodakarensis (strain ATCC BAA-918 / JCM 12380 / KOD1) (Pyrococcus kodakaraensis (strain KOD1)).